The sequence spans 172 residues: MORN repeat-containing protein 5 (172 aa).

3 MORN repeats span residues 8–30 (YIGEFVDGRMEGDAEYILPTETK), 31–53 (YIGEMKDGMFHGQGTLYFPNGSR), and 54–75 (FDAVWEKGLVVKGTYTFSDGLQ).

The protein resides in the cell projection. Its subcellular location is the cilium. The protein localises to the flagellum. In Bos taurus (Bovine), this protein is MORN repeat-containing protein 5 (MORN5).